The following is a 148-amino-acid chain: MQLILLEKIANLGNLGDKVNVKAGYGRNYLLPFGKATAATAANLAAFEERRAELEKAAADRKASAESRAAQLAELEVTITATAGDEGKLFGSIGTHDIADALTASGVEVAKSEVRLPNGTIRNVGEFDVAVHLHAEVEATVRVVVVAA.

It belongs to the bacterial ribosomal protein bL9 family.

Functionally, binds to the 23S rRNA. The protein is Large ribosomal subunit protein bL9 of Pseudomonas fluorescens (strain Pf0-1).